The following is a 459-amino-acid chain: DnaJ homolog subfamily A member 1 homolog (459 aa).

Residues 6–73 form the J domain; sequence EYYERLGVKP…EKRKMYDSYG (68 aa). A CR-type zinc finger spans residues 158–243; it reads GKLVKISISR…CKGKRVIQGK (86 aa). The Zn(2+) site is built by Cys-171, Cys-174, Cys-188, Cys-191, Cys-215, Cys-218, Cys-231, and Cys-234. CXXCXGXG motif repeat units lie at residues 171 to 178, 188 to 195, 215 to 222, and 231 to 238; these read CKTCKGSG, CPTCNGSR, CHTCHGTG, and CKECKGKR. The tract at residues 405-459 is disordered; it reads NTNEQSSHGGAGGAYQQHGGAYGHQKQQQQGFNPADFGAQFGGGGPQQAQQCQQQ. Positions 418 to 435 are enriched in low complexity; that stretch reads AYQQHGGAYGHQKQQQQG. A Cysteine methyl ester modification is found at Cys-456. A lipid anchor (S-farnesyl cysteine) is attached at Cys-456. A propeptide spans 457–459 (removed in mature form); sequence QQQ.

The protein resides in the membrane. It localises to the cytoplasm. The protein localises to the microsome. It is found in the mitochondrion. Its subcellular location is the nucleus. The protein resides in the perinuclear region. Functionally, co-chaperone for Hsp70 family members. Plays a role in protein transport into mitochondria and in the regulation of apoptosis via its role as co-chaperone. The sequence is that of DnaJ homolog subfamily A member 1 homolog (dnaja1) from Dictyostelium discoideum (Social amoeba).